The sequence spans 639 residues: Chaperone protein HtpG (639 aa).

The interval 1 to 343 is a; substrate-binding; the sequence is MEATATKEHL…SNDLPLNVSR (343 aa). The interval 344-564 is b; sequence EILQESKDIE…THDMSGNLER (221 aa). A c region spans residues 565–639; sequence LLKSAGQKVT…QLFLSTGSKE (75 aa).

Belongs to the heat shock protein 90 family. As to quaternary structure, homodimer.

The protein resides in the cytoplasm. Functionally, molecular chaperone. Has ATPase activity. The sequence is that of Chaperone protein HtpG from Nitrosospira multiformis (strain ATCC 25196 / NCIMB 11849 / C 71).